The following is a 118-amino-acid chain: Ribosome-binding factor A (118 aa).

It belongs to the RbfA family. In terms of assembly, monomer. Binds 30S ribosomal subunits, but not 50S ribosomal subunits or 70S ribosomes.

It localises to the cytoplasm. Its function is as follows. One of several proteins that assist in the late maturation steps of the functional core of the 30S ribosomal subunit. Associates with free 30S ribosomal subunits (but not with 30S subunits that are part of 70S ribosomes or polysomes). Required for efficient processing of 16S rRNA. May interact with the 5'-terminal helix region of 16S rRNA. The protein is Ribosome-binding factor A of Latilactobacillus sakei subsp. sakei (strain 23K) (Lactobacillus sakei subsp. sakei).